The following is a 738-amino-acid chain: NADH dehydrogenase [ubiquinone] iron-sulfur protein 1, mitochondrial (738 aa).

The N-terminal 27 residues, 1-27 (MGLGLLASRALRSSRIIRNSTRTIVST), are a transit peptide targeting the mitochondrion. A 2Fe-2S ferredoxin-type domain is found at 66-144 (DVIEVFVDGY…GMKIKTDTPI (79 aa)). 4 residues coordinate [2Fe-2S] cluster: Cys-100, Cys-111, Cys-114, and Cys-128. Residues 144–183 (IAKKAREGVMEFLLMNHPLDCPICDQGGECDLQDQSMAFG) form the 4Fe-4S His(Cys)3-ligated-type domain. His-160, Cys-164, Cys-167, Cys-173, Cys-212, Cys-215, Cys-218, and Cys-262 together coordinate [4Fe-4S] cluster. One can recognise a 4Fe-4S Mo/W bis-MGD-type domain in the interval 281–337 (LKGTESIDVTDAVGSNIRIDSRGPEVMRVVPRLNEDINEEWISDKTRFFYDGLKRQR).

It belongs to the complex I 75 kDa subunit family. As to quaternary structure, complex I is composed of about 45 different subunits. This is a component of the iron-sulfur (IP) fragment of the enzyme. It depends on [2Fe-2S] cluster as a cofactor. Requires [4Fe-4S] cluster as cofactor.

The protein resides in the mitochondrion inner membrane. The enzyme catalyses a ubiquinone + NADH + 5 H(+)(in) = a ubiquinol + NAD(+) + 4 H(+)(out). Functionally, core subunit of the mitochondrial membrane respiratory chain NADH dehydrogenase (Complex I) that is believed to belong to the minimal assembly required for catalysis. Complex I functions in the transfer of electrons from NADH to the respiratory chain. The immediate electron acceptor for the enzyme is believed to be ubiquinone. This is the largest subunit of complex I and it is a component of the iron-sulfur (IP) fragment of the enzyme. It may form part of the active site crevice where NADH is oxidized. In Solanum tuberosum (Potato), this protein is NADH dehydrogenase [ubiquinone] iron-sulfur protein 1, mitochondrial.